A 542-amino-acid polypeptide reads, in one-letter code: Isocitrate lyase (542 aa).

Serine 102 to tryptophan 104 contributes to the substrate binding site. Aspartate 170 is a binding site for Mg(2+). Residue cysteine 208 is the Proton acceptor of the active site. Substrate is bound by residues glycine 209–histidine 210, arginine 245, asparagine 428–serine 432, and threonine 462.

The protein belongs to the isocitrate lyase/PEP mutase superfamily. Isocitrate lyase family. As to quaternary structure, homotetramer. Mg(2+) is required as a cofactor.

It localises to the glyoxysome. It catalyses the reaction D-threo-isocitrate = glyoxylate + succinate. The enzyme catalyses (2S,3R)-3-hydroxybutane-1,2,3-tricarboxylate = pyruvate + succinate. Its pathway is carbohydrate metabolism; glyoxylate cycle; (S)-malate from isocitrate: step 1/2. Its function is as follows. Catalyzes the formation of succinate and glyoxylate from isocitrate, a key step of the glyoxylate cycle, which operates as an anaplerotic route for replenishing the tricarboxylic acid cycle. Required for growth on ethanol or acetate, but dispensable when fermentable carbon sources are available. Also acts on 2-methylisocitrate. The protein is Isocitrate lyase of Kluyveromyces lactis (strain ATCC 8585 / CBS 2359 / DSM 70799 / NBRC 1267 / NRRL Y-1140 / WM37) (Yeast).